Reading from the N-terminus, the 723-residue chain is Tryptophan 2-monooxygenase (723 aa).

FMN-binding residues include Ser218, Glu238, Arg246, and Arg266. Arg266 is a binding site for substrate.

It belongs to the tryptophan 2-monooxygenase family. Requires FMN as cofactor.

It catalyses the reaction L-tryptophan + O2 = indole-3-acetamide + CO2 + H2O. It functions in the pathway plant hormone metabolism; auxin biosynthesis. The sequence is that of Tryptophan 2-monooxygenase (iaaM) from Allorhizobium ampelinum (strain ATCC BAA-846 / DSM 112012 / S4) (Agrobacterium vitis (strain S4)).